The following is a 204-amino-acid chain: Rho GDP-dissociation inhibitor 1 (204 aa).

The segment at 1–36 (MAEQEPTAEQLAQIAAENEEDEHSVNYKPPAQKSIQ) is disordered. N-acetylalanine is present on alanine 2. Residue serine 34 is modified to Phosphoserine. Lysine 43 carries the N6-acetyllysine modification. Residue serine 47 is modified to Phosphoserine. 2 positions are modified to N6-acetyllysine: lysine 105 and lysine 127. Residues lysine 138 and lysine 141 each participate in a glycyl lysine isopeptide (Lys-Gly) (interchain with G-Cter in SUMO1); alternate cross-link. Glycyl lysine isopeptide (Lys-Gly) (interchain with G-Cter in SUMO2); alternate cross-links involve residues lysine 138 and lysine 141. At lysine 141 the chain carries N6-acetyllysine; alternate. Lysine 141 carries the post-translational modification N6-succinyllysine; alternate. Lysine 178 is subject to N6-acetyllysine.

It belongs to the Rho GDI family. As to quaternary structure, monomer. Interacts with FER. Interacts with PLXNB3. Forms a heterodimer with RAC1. Interacts with RHOA, the affinity is increased by three orders of magnitude when RHOA is prenylated. Interacts with PSMD10; the interaction increases ARHGDIA association with RHOA, leading to ARHGDIA-mediated inactivation of RHOA and ROCK and prolonged AKT activation. Interacts with KANK2; the interaction is direct and may regulate the interaction of ARHGDIA with RHOA, RAC1 and CDC42. Interacts with RHOC. Interacts with CDC42. Interacts with NGFR (via death domain); NGFR binding decreases the affinity for RHOA.

It is found in the cytoplasm. Functionally, controls Rho proteins homeostasis. Regulates the GDP/GTP exchange reaction of the Rho proteins by inhibiting the dissociation of GDP from them, and the subsequent binding of GTP to them. Retains Rho proteins such as CDC42, RAC1 and RHOA in an inactive cytosolic pool, regulating their stability and protecting them from degradation. Actively involved in the recycling and distribution of activated Rho GTPases in the cell, mediates extraction from membranes of both inactive and activated molecules due its exceptionally high affinity for prenylated forms. Through the modulation of Rho proteins, may play a role in cell motility regulation. In glioma cells, inhibits cell migration and invasion by mediating the signals of SEMA5A and PLXNB3 that lead to inactivation of RAC1. The sequence is that of Rho GDP-dissociation inhibitor 1 (ARHGDIA) from Homo sapiens (Human).